The following is a 213-amino-acid chain: Cytochrome c biogenesis ATP-binding export protein CcmA (213 aa).

The ABC transporter domain occupies 8–213 (LQATALTCER…RDIDLGQWAA (206 aa)). ATP is bound at residue 40–47 (GPNGSGKT).

It belongs to the ABC transporter superfamily. CcmA exporter (TC 3.A.1.107) family. The complex is composed of two ATP-binding proteins (CcmA) and two transmembrane proteins (CcmB).

The protein resides in the cell inner membrane. It carries out the reaction heme b(in) + ATP + H2O = heme b(out) + ADP + phosphate + H(+). Part of the ABC transporter complex CcmAB involved in the biogenesis of c-type cytochromes; once thought to export heme, this seems not to be the case, but its exact role is uncertain. Responsible for energy coupling to the transport system. This is Cytochrome c biogenesis ATP-binding export protein CcmA from Pseudomonas savastanoi pv. phaseolicola (strain 1448A / Race 6) (Pseudomonas syringae pv. phaseolicola (strain 1448A / Race 6)).